The sequence spans 226 residues: MNENLFASFTTPTMMGLPIVILIVLFPSILFPSPDRLINNRLTSIQQWLIQLTSKQMLSIHNHKGQTWALMLISLILFIGSTNLLGLLPHSFTPTTQLSMNLGMAIPLWAGTVITGFRHKTKASLAHFLPQGTPLPLIPMLVIIETISLFIQPMALAVRLTANITAGHLLIHLIGGATLALMDISTTTAFITFIVLILLTILEFAVALIQAYVFTLLVSLYLHDNT.

6 helical membrane passes run 12-32 (PTMM…ILFP), 68-88 (WALM…LGLL), 97-117 (QLSM…ITGF), 138-158 (IPML…ALAV), 164-184 (ITAG…LMDI), and 189-209 (AFIT…VALI).

This sequence belongs to the ATPase A chain family. In terms of assembly, component of the ATP synthase complex composed at least of ATP5F1A/subunit alpha, ATP5F1B/subunit beta, ATP5MC1/subunit c (homooctomer), MT-ATP6/subunit a, MT-ATP8/subunit 8, ATP5ME/subunit e, ATP5MF/subunit f, ATP5MG/subunit g, ATP5MK/subunit k, ATP5MJ/subunit j, ATP5F1C/subunit gamma, ATP5F1D/subunit delta, ATP5F1E/subunit epsilon, ATP5PF/subunit F6, ATP5PB/subunit b, ATP5PD/subunit d, ATP5PO/subunit OSCP. ATP synthase complex consists of a soluble F(1) head domain (subunits alpha(3) and beta(3)) - the catalytic core - and a membrane F(0) domain - the membrane proton channel (subunits c, a, 8, e, f, g, k and j). These two domains are linked by a central stalk (subunits gamma, delta, and epsilon) rotating inside the F1 region and a stationary peripheral stalk (subunits F6, b, d, and OSCP). Interacts with DNAJC30; interaction is direct.

The protein localises to the mitochondrion inner membrane. It catalyses the reaction H(+)(in) = H(+)(out). Its function is as follows. Subunit a, of the mitochondrial membrane ATP synthase complex (F(1)F(0) ATP synthase or Complex V) that produces ATP from ADP in the presence of a proton gradient across the membrane which is generated by electron transport complexes of the respiratory chain. ATP synthase complex consist of a soluble F(1) head domain - the catalytic core - and a membrane F(1) domain - the membrane proton channel. These two domains are linked by a central stalk rotating inside the F(1) region and a stationary peripheral stalk. During catalysis, ATP synthesis in the catalytic domain of F(1) is coupled via a rotary mechanism of the central stalk subunits to proton translocation. With the subunit c (ATP5MC1), forms the proton-conducting channel in the F(0) domain, that contains two crucial half-channels (inlet and outlet) that facilitate proton movement from the mitochondrial intermembrane space (IMS) into the matrix. Protons are taken up via the inlet half-channel and released through the outlet half-channel, following a Grotthuss mechanism. The polypeptide is ATP synthase F(0) complex subunit a (Halichoerus grypus (Gray seal)).